Here is a 441-residue protein sequence, read N- to C-terminus: Ribulose bisphosphate carboxylase large chain (441 aa).

Lys5 bears the N6,N6,N6-trimethyllysine mark. A substrate-binding site is contributed by Thr164. Lys166 (proton acceptor) is an active-site residue. Lys168 lines the substrate pocket. Mg(2+)-binding residues include Lys192, Asp194, and Glu195. Lys192 carries the N6-carboxylysine modification. His285 acts as the Proton acceptor in catalysis. Residues Arg286, His318, and Ser370 each contribute to the substrate site.

The protein belongs to the RuBisCO large chain family. Type I subfamily. In terms of assembly, heterohexadecamer of 8 large chains and 8 small chains; disulfide-linked. The disulfide link is formed within the large subunit homodimers. Mg(2+) is required as a cofactor. Post-translationally, the disulfide bond which can form in the large chain dimeric partners within the hexadecamer appears to be associated with oxidative stress and protein turnover.

The protein resides in the plastid. Its subcellular location is the chloroplast. The catalysed reaction is 2 (2R)-3-phosphoglycerate + 2 H(+) = D-ribulose 1,5-bisphosphate + CO2 + H2O. The enzyme catalyses D-ribulose 1,5-bisphosphate + O2 = 2-phosphoglycolate + (2R)-3-phosphoglycerate + 2 H(+). Functionally, ruBisCO catalyzes two reactions: the carboxylation of D-ribulose 1,5-bisphosphate, the primary event in carbon dioxide fixation, as well as the oxidative fragmentation of the pentose substrate in the photorespiration process. Both reactions occur simultaneously and in competition at the same active site. This chain is Ribulose bisphosphate carboxylase large chain, found in Hemionitis engywookii (Fendler's false cloak fern).